The following is a 193-amino-acid chain: Potassium-transporting ATPase KdpC subunit (193 aa).

Residues 14–34 form a helical membrane-spanning segment; the sequence is ITFTFLVLCGLVYPLIVTGIA.

The protein belongs to the KdpC family. The system is composed of three essential subunits: KdpA, KdpB and KdpC.

It localises to the cell membrane. In terms of biological role, part of the high-affinity ATP-driven potassium transport (or Kdp) system, which catalyzes the hydrolysis of ATP coupled with the electrogenic transport of potassium into the cytoplasm. This subunit acts as a catalytic chaperone that increases the ATP-binding affinity of the ATP-hydrolyzing subunit KdpB by the formation of a transient KdpB/KdpC/ATP ternary complex. This chain is Potassium-transporting ATPase KdpC subunit, found in Bacillus cereus (strain G9842).